The chain runs to 205 residues: Casparian strip membrane protein 4 (205 aa).

The Cytoplasmic segment spans residues 1–58 (MDIEKTGSRREEEEPIVQKPKLEKGKGKAHVFAPPMNYSRIMEKHKQEKVSMAGWKRG). A helical transmembrane segment spans residues 59–79 (VAIFDFVLRLIAAITAMAAAA). At 80–109 (KMATTEETLPFFTQFLQFSADYTDLPTLSS) the chain is on the extracellular side. A helical membrane pass occupies residues 110–130 (FVIVNSIVGGYLTLSLPFSIV). Over 131-148 (CILRPLAVPPRLFLILCD) the chain is Cytoplasmic. A helical transmembrane segment spans residues 149–169 (TAMMGLTMVAASASAAIVYLA). The Extracellular segment spans residues 170-205 (HNGNSSSNWLPVCQQFGDFCKERVAPWWLPLLQRLF). Asn-173 is a glycosylation site (N-linked (GlcNAc...) asparagine).

Belongs to the Casparian strip membrane proteins (CASP) family. As to quaternary structure, homodimer and heterodimers.

Its subcellular location is the cell membrane. In terms of biological role, regulates membrane-cell wall junctions and localized cell wall deposition. Required for establishment of the Casparian strip membrane domain (CSD) and the subsequent formation of Casparian strips, a cell wall modification of the root endodermis that determines an apoplastic barrier between the intraorganismal apoplasm and the extraorganismal apoplasm and prevents lateral diffusion. This chain is Casparian strip membrane protein 4, found in Raphanus sativus (Radish).